The chain runs to 192 residues: SRP-independent targeting protein 2 homolog (192 aa).

2 helical membrane passes run 16–36 (ILTFMLAADLIVNVLFWILRF) and 102–122 (WILIFLAALTSVKVFAFYLLV). The tract at residues 149–192 (LNQPPQQQQQQQQQQHQQHATPSEPVLSKRQQKLRKKAAKYSRP) is disordered. Residues 151-167 (QPPQQQQQQQQQQHQQH) are compositionally biased toward low complexity. Basic residues predominate over residues 178-192 (RQQKLRKKAAKYSRP).

This sequence belongs to the TMEM208 family.

The protein localises to the endoplasmic reticulum membrane. Functionally, may function in a SRP (signal recognition particle) and GET (guided entry of tail-anchored proteins) independent pathway for targeting a broad range of substrate proteins to the endoplasmic reticulum. Has a role in meiosis. The sequence is that of SRP-independent targeting protein 2 homolog from Schizosaccharomyces pombe (strain 972 / ATCC 24843) (Fission yeast).